Reading from the N-terminus, the 314-residue chain is Methionyl-tRNA formyltransferase (314 aa).

Residue 113 to 116 (SLLP) coordinates (6S)-5,6,7,8-tetrahydrofolate.

This sequence belongs to the Fmt family.

The catalysed reaction is L-methionyl-tRNA(fMet) + (6R)-10-formyltetrahydrofolate = N-formyl-L-methionyl-tRNA(fMet) + (6S)-5,6,7,8-tetrahydrofolate + H(+). Functionally, attaches a formyl group to the free amino group of methionyl-tRNA(fMet). The formyl group appears to play a dual role in the initiator identity of N-formylmethionyl-tRNA by promoting its recognition by IF2 and preventing the misappropriation of this tRNA by the elongation apparatus. This Stutzerimonas stutzeri (strain A1501) (Pseudomonas stutzeri) protein is Methionyl-tRNA formyltransferase.